We begin with the raw amino-acid sequence, 476 residues long: Adenosylhomocysteinase (476 aa).

Substrate-binding residues include Thr-67, Asp-142, and Glu-202. Residue 203–205 participates in NAD(+) binding; sequence TTT. Substrate contacts are provided by Lys-232 and Asp-236. NAD(+) is bound by residues Asn-237, 266–271, Glu-289, Asn-324, 345–347, and Asn-390; these read GYGDVG and IGH.

It belongs to the adenosylhomocysteinase family. It depends on NAD(+) as a cofactor.

It localises to the cytoplasm. The enzyme catalyses S-adenosyl-L-homocysteine + H2O = L-homocysteine + adenosine. The protein operates within amino-acid biosynthesis; L-homocysteine biosynthesis; L-homocysteine from S-adenosyl-L-homocysteine: step 1/1. May play a key role in the regulation of the intracellular concentration of adenosylhomocysteine. The sequence is that of Adenosylhomocysteinase from Synechococcus sp. (strain WH7803).